Here is a 520-residue protein sequence, read N- to C-terminus: Putative thymidine phosphorylase 1 (520 aa).

The protein belongs to the thymidine/pyrimidine-nucleoside phosphorylase family. Type 2 subfamily.

The catalysed reaction is thymidine + phosphate = 2-deoxy-alpha-D-ribose 1-phosphate + thymine. This Cupriavidus necator (strain ATCC 17699 / DSM 428 / KCTC 22496 / NCIMB 10442 / H16 / Stanier 337) (Ralstonia eutropha) protein is Putative thymidine phosphorylase 1.